We begin with the raw amino-acid sequence, 236 residues long: 2-C-methyl-D-erythritol 4-phosphate cytidylyltransferase (236 aa).

Belongs to the IspD/TarI cytidylyltransferase family. IspD subfamily. In terms of assembly, homodimer.

The catalysed reaction is 2-C-methyl-D-erythritol 4-phosphate + CTP + H(+) = 4-CDP-2-C-methyl-D-erythritol + diphosphate. It participates in isoprenoid biosynthesis; isopentenyl diphosphate biosynthesis via DXP pathway; isopentenyl diphosphate from 1-deoxy-D-xylulose 5-phosphate: step 2/6. In terms of biological role, catalyzes the formation of 4-diphosphocytidyl-2-C-methyl-D-erythritol from CTP and 2-C-methyl-D-erythritol 4-phosphate (MEP). The polypeptide is 2-C-methyl-D-erythritol 4-phosphate cytidylyltransferase (Salmonella heidelberg (strain SL476)).